The chain runs to 475 residues: ATP synthase subunit beta (475 aa).

155-162 (GGAGVGKT) provides a ligand contact to ATP.

It belongs to the ATPase alpha/beta chains family. F-type ATPases have 2 components, CF(1) - the catalytic core - and CF(0) - the membrane proton channel. CF(1) has five subunits: alpha(3), beta(3), gamma(1), delta(1), epsilon(1). CF(0) has three main subunits: a(1), b(2) and c(9-12). The alpha and beta chains form an alternating ring which encloses part of the gamma chain. CF(1) is attached to CF(0) by a central stalk formed by the gamma and epsilon chains, while a peripheral stalk is formed by the delta and b chains.

The protein resides in the cell inner membrane. The enzyme catalyses ATP + H2O + 4 H(+)(in) = ADP + phosphate + 5 H(+)(out). Its function is as follows. Produces ATP from ADP in the presence of a proton gradient across the membrane. The catalytic sites are hosted primarily by the beta subunits. This Rhizobium etli (strain ATCC 51251 / DSM 11541 / JCM 21823 / NBRC 15573 / CFN 42) protein is ATP synthase subunit beta.